Here is a 510-residue protein sequence, read N- to C-terminus: Inositol-3-phosphate synthase (510 aa).

Positions 70, 71, 72, 73, 143, 180, 190, 193, 230, 231, 232, 233, 281, 282, 306, 309, 340, 341, 342, 355, 393, 394, 422, and 423 each coordinate NAD(+).

It belongs to the myo-inositol 1-phosphate synthase family. NAD(+) serves as cofactor.

The protein resides in the cytoplasm. The protein localises to the cytosol. It is found in the nucleus. The enzyme catalyses D-glucose 6-phosphate = 1D-myo-inositol 3-phosphate. It functions in the pathway polyol metabolism; myo-inositol biosynthesis; myo-inositol from D-glucose 6-phosphate: step 1/2. In terms of biological role, key enzyme in myo-inositol biosynthesis pathway that catalyzes the conversion of glucose 6-phosphate to 1-myo-inositol 1-phosphate in a NAD-dependent manner. This is Inositol-3-phosphate synthase from Zea mays (Maize).